Consider the following 221-residue polypeptide: Probable septum site-determining protein MinC (221 aa).

It belongs to the MinC family. In terms of assembly, interacts with MinD and FtsZ.

Functionally, cell division inhibitor that blocks the formation of polar Z ring septums. Rapidly oscillates between the poles of the cell to destabilize FtsZ filaments that have formed before they mature into polar Z rings. Prevents FtsZ polymerization. This is Probable septum site-determining protein MinC from Shewanella loihica (strain ATCC BAA-1088 / PV-4).